We begin with the raw amino-acid sequence, 492 residues long: Bifunctional purine biosynthesis protein PurH (492 aa).

Residues 1–144 enclose the MGS-like domain; that stretch reads MKKAILSVSN…KNYKHVTTIV (144 aa).

This sequence belongs to the PurH family.

It catalyses the reaction (6R)-10-formyltetrahydrofolate + 5-amino-1-(5-phospho-beta-D-ribosyl)imidazole-4-carboxamide = 5-formamido-1-(5-phospho-D-ribosyl)imidazole-4-carboxamide + (6S)-5,6,7,8-tetrahydrofolate. The enzyme catalyses IMP + H2O = 5-formamido-1-(5-phospho-D-ribosyl)imidazole-4-carboxamide. Its pathway is purine metabolism; IMP biosynthesis via de novo pathway; 5-formamido-1-(5-phospho-D-ribosyl)imidazole-4-carboxamide from 5-amino-1-(5-phospho-D-ribosyl)imidazole-4-carboxamide (10-formyl THF route): step 1/1. It functions in the pathway purine metabolism; IMP biosynthesis via de novo pathway; IMP from 5-formamido-1-(5-phospho-D-ribosyl)imidazole-4-carboxamide: step 1/1. This is Bifunctional purine biosynthesis protein PurH from Staphylococcus aureus (strain Newman).